A 201-amino-acid polypeptide reads, in one-letter code: Potassium-transporting ATPase KdpC subunit (201 aa).

The chain crosses the membrane as a helical span at residues 10–30 (VVLVVLTVICGLAYPLAMTGI). The disordered stretch occupies residues 67-105 (HGRPSATSAADPADPTKTVSSPYNAANSSGSNLGPTSKA). The segment covering 70 to 82 (PSATSAADPADPT) has biased composition (low complexity). The span at 83-105 (KTVSSPYNAANSSGSNLGPTSKA) shows a compositional bias: polar residues.

This sequence belongs to the KdpC family. As to quaternary structure, the system is composed of three essential subunits: KdpA, KdpB and KdpC.

Its subcellular location is the cell inner membrane. Part of the high-affinity ATP-driven potassium transport (or Kdp) system, which catalyzes the hydrolysis of ATP coupled with the electrogenic transport of potassium into the cytoplasm. This subunit acts as a catalytic chaperone that increases the ATP-binding affinity of the ATP-hydrolyzing subunit KdpB by the formation of a transient KdpB/KdpC/ATP ternary complex. This chain is Potassium-transporting ATPase KdpC subunit, found in Rhodopseudomonas palustris (strain BisB5).